A 426-amino-acid chain; its full sequence is Glutamyl-tRNA(Gln) amidotransferase subunit D (426 aa).

The Asparaginase/glutaminase domain maps to 82–413 (KNISILSTGG…KDAKKLICKN (332 aa)). Active-site residues include Thr92, Thr168, Asp169, and Lys245.

It belongs to the asparaginase 1 family. GatD subfamily. Heterodimer of GatD and GatE.

The enzyme catalyses L-glutamyl-tRNA(Gln) + L-glutamine + ATP + H2O = L-glutaminyl-tRNA(Gln) + L-glutamate + ADP + phosphate + H(+). Allows the formation of correctly charged Gln-tRNA(Gln) through the transamidation of misacylated Glu-tRNA(Gln) in organisms which lack glutaminyl-tRNA synthetase. The reaction takes place in the presence of glutamine and ATP through an activated gamma-phospho-Glu-tRNA(Gln). The GatDE system is specific for glutamate and does not act on aspartate. This is Glutamyl-tRNA(Gln) amidotransferase subunit D from Methanococcus vannielii (strain ATCC 35089 / DSM 1224 / JCM 13029 / OCM 148 / SB).